Here is a 447-residue protein sequence, read N- to C-terminus: Chordin-like protein 1 (447 aa).

Positions 1–22 (MEGIKYIASLVFFFVFLEASKT) are cleaved as a signal peptide. 2 consecutive VWFC domains span residues 30–95 (TYCM…PRCP) and 108–174 (KSCE…RVCR). Asn113 is a glycosylation site (N-linked (GlcNAc...) asparagine). Positions 174 to 176 (RGD) match the Cell attachment site motif. The interval 199–219 (HSYLRSPYDPPPSRQAGGLPR) is disordered. A VWFC 3 domain is found at 253–318 (QVCVSNGKTY…LDGKCCKVCP (66 aa)). A glycan (N-linked (GlcNAc...) asparagine) is linked at Asn286.

It localises to the secreted. Its function is as follows. Seems to antagonize the function of BMP4 by binding to it and preventing its interaction with receptors. Alters the fate commitment of neural stem cells from gliogenesis to neurogenesis. Contributes to neuronal differentiation of neural stem cells in the brain by preventing the adoption of a glial fate. May play a crucial role in dorsoventral axis formation. May play a role in embryonic bone formation. Plays a role during anterior segment eye development. This chain is Chordin-like protein 1 (Chrdl1), found in Rattus norvegicus (Rat).